Consider the following 443-residue polypeptide: MDLALFFRNEVKPALGCTEPGAVAYAASIAARHCPGEPLSVALSLSLSMFKNGRDVGIPGTGGLRGNRLAAVLGVLAGDADKGLMALEHIDMAVVERAQTLLDAGMVTEEVVDGVPGVYAAVTLRCAGHEVTVTVAGRHDRVASIVVDGEVVGGEGMERAPEADGTLHGGASCEPSASFTEPPLPAYLEELRECDFAQLWDMAAGIDATLEQELLRGAAMNMAVARMGLESGWGLGVGHTLAAHAEAADLHARIRFMAGAAADVRMAGAPQPVMSSAGSGNHGITATVPVAVAAEGLGVSPRVQAEALALSHLVTGYLKAHTGRLTPICGCSVAAGAGAAAGIVKVLGGNAVQAERAVASLMASLMGMLCDGAKGSCGLKVATAAGEAYAAALLGMDDRGVQRPEGVVNPDIATTARALARLSREGFAAADAVMVELLGGGKH.

The interval 156–178 (GMERAPEADGTLHGGASCEPSAS) is disordered.

It belongs to the UPF0597 family.

This Nitratidesulfovibrio vulgaris (strain DP4) (Desulfovibrio vulgaris) protein is UPF0597 protein Dvul_2496.